A 371-amino-acid chain; its full sequence is 3-isopropylmalate dehydrogenase (371 aa).

Glycine 77–glutamate 90 is an NAD(+) binding site. Arginine 97, arginine 107, arginine 135, and aspartate 224 together coordinate substrate. Residues aspartate 224, aspartate 248, and aspartate 252 each contribute to the Mg(2+) site. Glycine 282–asparagine 294 lines the NAD(+) pocket.

It belongs to the isocitrate and isopropylmalate dehydrogenases family. LeuB type 1 subfamily. Homodimer. Mg(2+) is required as a cofactor. Mn(2+) serves as cofactor.

It is found in the cytoplasm. The enzyme catalyses (2R,3S)-3-isopropylmalate + NAD(+) = 4-methyl-2-oxopentanoate + CO2 + NADH. Its pathway is amino-acid biosynthesis; L-leucine biosynthesis; L-leucine from 3-methyl-2-oxobutanoate: step 3/4. Catalyzes the oxidation of 3-carboxy-2-hydroxy-4-methylpentanoate (3-isopropylmalate) to 3-carboxy-4-methyl-2-oxopentanoate. The product decarboxylates to 4-methyl-2 oxopentanoate. The protein is 3-isopropylmalate dehydrogenase of Geobacillus kaustophilus (strain HTA426).